The sequence spans 439 residues: Keratin, type I cytoskeletal 40 (439 aa).

Residues 1–89 (MASDGSPSCC…CEEGSFNSNE (89 aa)) form a head region. An IF rod domain is found at 89–400 (EKETMQFLND…GLLEKEDSRL (312 aa)). The interval 90–124 (KETMQFLNDRLASYLERVRSLEENNAELECRIREQ) is coil 1A. A linker 1 region spans residues 125–135 (CEPNAPLVCPD). Residues 136-236 (YQRYFDTIEE…HEEEVNLLRE (101 aa)) form a coil 1B region. The tract at residues 237-252 (QLGDRLSVELDTAPTV) is linker 12. Positions 253–396 (DLNKVLDEMR…NTYRGLLEKE (144 aa)) are coil 2. The tract at residues 397-439 (DSRLPCNPGSGAPMPNSTCEPCSNSMCEPCSAYVICTVENCCA) is tail.

It belongs to the intermediate filament family. In terms of assembly, heterotetramer of two type I and two type II keratins.

In terms of biological role, may play a role in late hair differentiation. In Mus musculus (Mouse), this protein is Keratin, type I cytoskeletal 40 (Krt40).